The sequence spans 393 residues: Acetylornithine aminotransferase (393 aa).

Pyridoxal 5'-phosphate contacts are provided by residues Gly-100 to Thr-101 and Phe-132. N(2)-acetyl-L-ornithine is bound at residue Arg-135. Residue Asp-217 to Gln-220 participates in pyridoxal 5'-phosphate binding. Residue Lys-246 is modified to N6-(pyridoxal phosphate)lysine. Ser-275 contacts N(2)-acetyl-L-ornithine. Residue Thr-276 coordinates pyridoxal 5'-phosphate.

Belongs to the class-III pyridoxal-phosphate-dependent aminotransferase family. ArgD subfamily. As to quaternary structure, homodimer. Pyridoxal 5'-phosphate is required as a cofactor.

The protein localises to the cytoplasm. It carries out the reaction N(2)-acetyl-L-ornithine + 2-oxoglutarate = N-acetyl-L-glutamate 5-semialdehyde + L-glutamate. It participates in amino-acid biosynthesis; L-arginine biosynthesis; N(2)-acetyl-L-ornithine from L-glutamate: step 4/4. The chain is Acetylornithine aminotransferase from Campylobacter jejuni subsp. jejuni serotype O:2 (strain ATCC 700819 / NCTC 11168).